The following is a 242-amino-acid chain: 7-cyano-7-deazaguanine synthase (242 aa).

An ATP-binding site is contributed by 12–22 (FSGGQDSTTCL). Residues Cys200, Cys215, Cys218, and Cys221 each contribute to the Zn(2+) site.

The protein belongs to the QueC family. Zn(2+) serves as cofactor.

The enzyme catalyses 7-carboxy-7-deazaguanine + NH4(+) + ATP = 7-cyano-7-deazaguanine + ADP + phosphate + H2O + H(+). It participates in purine metabolism; 7-cyano-7-deazaguanine biosynthesis. In terms of biological role, catalyzes the ATP-dependent conversion of 7-carboxy-7-deazaguanine (CDG) to 7-cyano-7-deazaguanine (preQ(0)). The polypeptide is 7-cyano-7-deazaguanine synthase (Nitratidesulfovibrio vulgaris (strain ATCC 29579 / DSM 644 / CCUG 34227 / NCIMB 8303 / VKM B-1760 / Hildenborough) (Desulfovibrio vulgaris)).